Reading from the N-terminus, the 30-residue chain is Varv peptide H (30 aa).

Positions 1 to 30 form a cross-link, cyclopeptide (Gly-Asn); that stretch reads GLPVCGETCFGGTCNTPGCSCETWPVCSRN. 3 disulfides stabilise this stretch: Cys5-Cys19, Cys9-Cys21, and Cys14-Cys27.

Post-translationally, this is a cyclic peptide.

Functionally, probably participates in a plant defense mechanism. The sequence is that of Varv peptide H from Viola arvensis (European field pansy).